Consider the following 490-residue polypeptide: Asparagine--tRNA ligase (490 aa).

The protein belongs to the class-II aminoacyl-tRNA synthetase family. As to quaternary structure, homodimer.

The protein resides in the cytoplasm. It carries out the reaction tRNA(Asn) + L-asparagine + ATP = L-asparaginyl-tRNA(Asn) + AMP + diphosphate + H(+). In Rhodopirellula baltica (strain DSM 10527 / NCIMB 13988 / SH1), this protein is Asparagine--tRNA ligase.